A 1141-amino-acid polypeptide reads, in one-letter code: Myosin-binding protein C, slow-type (1141 aa).

Over residues 1–10 (MPEPTKKEEN) the composition is skewed to basic and acidic residues. Positions 1 to 51 (MPEPTKKEENEVPAPAPPPEEPSKEKEAGTTPAKDWTLVETPPGEEQAKQN) are disordered. Ig-like C2-type domains are found at residues 72–144 (GEDI…RCEV), 251–340 (SAAF…VREP), 341–431 (PIMV…VDLK), 432–520 (PLKI…HVID), and 522–619 (PKII…VVDF). At Thr406 the chain carries Phosphothreonine. Ser611 bears the Phosphoserine mark. 2 Fibronectin type-III domains span residues 622 to 721 (PPVA…TSPP) and 722 to 833 (TLLT…VKEI). Thr798 carries the post-translational modification Phosphothreonine. A Phosphotyrosine modification is found at Tyr823. An Ig-like C2-type 6 domain is found at 837-931 (PKIRIPRHLK…ASIDIQIIDR (95 aa)). One can recognise a Fibronectin type-III 3 domain in the interval 934 to 1029 (PPQIVKIEDV…TKESAVIARD (96 aa)). The 95-residue stretch at 1047-1141 (PMFTQPLVNT…CKLEVKVIAQ (95 aa)) folds into the Ig-like C2-type 7 domain.

The protein belongs to the immunoglobulin superfamily. MyBP family. In terms of assembly, interacts with USP25 (isoform USP25m only); the interaction prevents proteasomal degradation of MYBPC1.

In terms of biological role, thick filament-associated protein located in the crossbridge region of vertebrate striated muscle a bands. Slow skeletal protein that binds to both myosin and actin. In vitro, binds to native thin filaments and modifies the activity of actin-activated myosin ATPase. May modulate muscle contraction or may play a more structural role. The chain is Myosin-binding protein C, slow-type (MYBPC1) from Homo sapiens (Human).